The chain runs to 419 residues: MAQEVIKIRGGRTLNGEVNISGAKNSAVAIIPATLLAQGHVKLEGLPQISDVKTLVSLLEDLNIKASLNGTELEVDTTEIQNAALPNNKVESLRASYYMMGAMLGRFKKCVIGLPGGCPLGPRPIDQHIKGFKALGAEIDESSTTSMKIEAKELKGAHIFLDMVSVGATINIMLAAVYATGQTVIENAAKEPEVVDVANFLTSMGANIKGAGTSTIKINGVKELHGSEYQVIPDRIEAGTYMCIAAACGENVILNNIVPKHVETLTAKFSELGVNVDVRDERIRINNNAPYRFVDIKTLVYPGFATDLQQPITPLLFMANGPSFVTDTIYPERFKHVEELKRMGANIEVDEGTATIKPSTLHGAEVYASDLRAGACLIIAGLIAEGVTTIYNVKHIYRGYTDIVEHLKALGADIWTETV.

24-25 is a phosphoenolpyruvate binding site; sequence KN. Arg-94 serves as a coordination point for UDP-N-acetyl-alpha-D-glucosamine. Cys-118 (proton donor) is an active-site residue. Position 118 is a 2-(S-cysteinyl)pyruvic acid O-phosphothioketal (Cys-118). Residues 123–127, Asp-307, and Ile-329 contribute to the UDP-N-acetyl-alpha-D-glucosamine site; that span reads RPIDQ.

It belongs to the EPSP synthase family. MurA subfamily.

It localises to the cytoplasm. It catalyses the reaction phosphoenolpyruvate + UDP-N-acetyl-alpha-D-glucosamine = UDP-N-acetyl-3-O-(1-carboxyvinyl)-alpha-D-glucosamine + phosphate. It functions in the pathway cell wall biogenesis; peptidoglycan biosynthesis. In terms of biological role, cell wall formation. Adds enolpyruvyl to UDP-N-acetylglucosamine. In Staphylococcus aureus (strain MRSA252), this protein is UDP-N-acetylglucosamine 1-carboxyvinyltransferase 2.